The chain runs to 621 residues: 1-deoxy-D-xylulose-5-phosphate synthase (621 aa).

Thiamine diphosphate is bound by residues histidine 80 and 121–123; that span reads GHS. Aspartate 152 provides a ligand contact to Mg(2+). Residues 153–154, asparagine 181, tyrosine 288, and glutamate 371 contribute to the thiamine diphosphate site; that span reads GA. Asparagine 181 contributes to the Mg(2+) binding site.

The protein belongs to the transketolase family. DXPS subfamily. In terms of assembly, homodimer. It depends on Mg(2+) as a cofactor. The cofactor is thiamine diphosphate.

The enzyme catalyses D-glyceraldehyde 3-phosphate + pyruvate + H(+) = 1-deoxy-D-xylulose 5-phosphate + CO2. It functions in the pathway metabolic intermediate biosynthesis; 1-deoxy-D-xylulose 5-phosphate biosynthesis; 1-deoxy-D-xylulose 5-phosphate from D-glyceraldehyde 3-phosphate and pyruvate: step 1/1. Functionally, catalyzes the acyloin condensation reaction between C atoms 2 and 3 of pyruvate and glyceraldehyde 3-phosphate to yield 1-deoxy-D-xylulose-5-phosphate (DXP). In Pectobacterium atrosepticum (strain SCRI 1043 / ATCC BAA-672) (Erwinia carotovora subsp. atroseptica), this protein is 1-deoxy-D-xylulose-5-phosphate synthase.